The sequence spans 130 residues: MPNNFRLAKVSSLLKKEITLILQNDLENDLIRDYFVNISKIDLSGDLQHCKIYITSTAKETVRKEIVANLNTAKSFIRNNLGKRIEMRRVPEIIFKEDIVLDKGLSVLKLLDELKNKHQDKNYEDKDANS.

The protein belongs to the RbfA family. As to quaternary structure, monomer. Binds 30S ribosomal subunits, but not 50S ribosomal subunits or 70S ribosomes.

It localises to the cytoplasm. One of several proteins that assist in the late maturation steps of the functional core of the 30S ribosomal subunit. Associates with free 30S ribosomal subunits (but not with 30S subunits that are part of 70S ribosomes or polysomes). Required for efficient processing of 16S rRNA. May interact with the 5'-terminal helix region of 16S rRNA. This is Ribosome-binding factor A from Prochlorococcus marinus (strain MIT 9312).